The primary structure comprises 461 residues: Argininosuccinate lyase (461 aa).

It belongs to the lyase 1 family. Argininosuccinate lyase subfamily.

The protein localises to the cytoplasm. The catalysed reaction is 2-(N(omega)-L-arginino)succinate = fumarate + L-arginine. Its pathway is amino-acid biosynthesis; L-arginine biosynthesis; L-arginine from L-ornithine and carbamoyl phosphate: step 3/3. Its activity is regulated as follows. Strongly inhibited by L-arginine. Inhibitory effects are lowered at pH 7.0 compared to those at pH 8.0. At 42 degrees Celsius and pH 8.0, activity decreases to 77% and 25% in the presence of 1 mM and 10 mM arginine, respectively. The other amino and organic acids do not affect activity. Functionally, catalyzes the last step of arginine biosynthesis, the conversion of argininosuccinate into L-arginine and fumarate. The protein is Argininosuccinate lyase of Nostoc sp. (strain PCC 7120 / SAG 25.82 / UTEX 2576).